A 419-amino-acid chain; its full sequence is L-rhamnose isomerase (419 aa).

Residues histidine 262, aspartate 294, and aspartate 296 each contribute to the Mn(2+) site.

This sequence belongs to the rhamnose isomerase family. Homotetramer. The cofactor is Mn(2+).

It is found in the cytoplasm. The catalysed reaction is L-rhamnopyranose = L-rhamnulose. It functions in the pathway carbohydrate degradation; L-rhamnose degradation; glycerone phosphate from L-rhamnose: step 1/3. In terms of biological role, catalyzes the interconversion of L-rhamnose and L-rhamnulose. This Escherichia coli O45:K1 (strain S88 / ExPEC) protein is L-rhamnose isomerase.